Here is a 259-residue protein sequence, read N- to C-terminus: Ferritin-3, chloroplastic (259 aa).

Residues 1 to 49 (MLLKAASTFSLLNIHGEKKDISPLFSSSSSISSPVSSGKSGNLSFPLRA) constitute a chloroplast transit peptide. The interval 50–88 (SKSSTTTTSTLSGVVFEPFEEVKKEMDLVPSGQQLSLAR) is extension peptide (EP). The Ferritin-like diiron domain occupies 89–242 (HLYSPECEAA…EYVSQLRRLG (154 aa)). Glu106, Glu141, His144, Glu190, and Gln224 together coordinate Fe cation.

Belongs to the ferritin family. As to quaternary structure, oligomer of 24 subunits. There are two types of subunits: L (light) chain and H (heavy) chain. The major chain can be light or heavy, depending on the species and tissue type. The functional molecule forms a roughly spherical shell with a diameter of 12 nm and contains a central cavity into which the insoluble mineral iron core is deposited.

The protein localises to the plastid. It localises to the chloroplast. It catalyses the reaction 4 Fe(2+) + O2 + 4 H(+) = 4 Fe(3+) + 2 H2O. Functionally, stores iron in a soluble, non-toxic, readily available form. Important for iron homeostasis. Has ferroxidase activity. Iron is taken up in the ferrous form and deposited as ferric hydroxides after oxidation. In Arabidopsis thaliana (Mouse-ear cress), this protein is Ferritin-3, chloroplastic (FER3).